Reading from the N-terminus, the 346-residue chain is tRNA N6-adenosine threonylcarbamoyltransferase (346 aa).

Residues His-111 and His-115 each contribute to the Fe cation site. Substrate is bound by residues 134–138 (LVSGG), Asp-167, Gly-180, and Asn-279. Asp-307 is a Fe cation binding site.

The protein belongs to the KAE1 / TsaD family. Fe(2+) serves as cofactor.

The protein localises to the cytoplasm. The catalysed reaction is L-threonylcarbamoyladenylate + adenosine(37) in tRNA = N(6)-L-threonylcarbamoyladenosine(37) in tRNA + AMP + H(+). Functionally, required for the formation of a threonylcarbamoyl group on adenosine at position 37 (t(6)A37) in tRNAs that read codons beginning with adenine. Is involved in the transfer of the threonylcarbamoyl moiety of threonylcarbamoyl-AMP (TC-AMP) to the N6 group of A37, together with TsaE and TsaB. TsaD likely plays a direct catalytic role in this reaction. In Burkholderia multivorans (strain ATCC 17616 / 249), this protein is tRNA N6-adenosine threonylcarbamoyltransferase.